The chain runs to 400 residues: Phosphoglycerate kinase (400 aa).

Substrate is bound by residues 22–24 (DFN), R38, 61–64 (HLGR), R119, and R152. ATP is bound by residues K205, G296, E327, and 353 to 356 (GGDT).

It belongs to the phosphoglycerate kinase family. Monomer.

It localises to the cytoplasm. It carries out the reaction (2R)-3-phosphoglycerate + ATP = (2R)-3-phospho-glyceroyl phosphate + ADP. It functions in the pathway carbohydrate degradation; glycolysis; pyruvate from D-glyceraldehyde 3-phosphate: step 2/5. This is Phosphoglycerate kinase from Campylobacter jejuni subsp. jejuni serotype O:23/36 (strain 81-176).